The primary structure comprises 113 residues: UPF0482 protein YnfB (113 aa).

Positions 1–28 (MKITLSKRIGLLAFLLPCALALSTTVHA) are cleaved as a signal peptide.

This sequence belongs to the UPF0482 family.

This Shigella flexneri serotype 5b (strain 8401) protein is UPF0482 protein YnfB.